Reading from the N-terminus, the 258-residue chain is Aspartate/glutamate leucyltransferase (258 aa).

Belongs to the R-transferase family. Bpt subfamily.

The protein resides in the cytoplasm. It carries out the reaction N-terminal L-glutamyl-[protein] + L-leucyl-tRNA(Leu) = N-terminal L-leucyl-L-glutamyl-[protein] + tRNA(Leu) + H(+). The catalysed reaction is N-terminal L-aspartyl-[protein] + L-leucyl-tRNA(Leu) = N-terminal L-leucyl-L-aspartyl-[protein] + tRNA(Leu) + H(+). Its function is as follows. Functions in the N-end rule pathway of protein degradation where it conjugates Leu from its aminoacyl-tRNA to the N-termini of proteins containing an N-terminal aspartate or glutamate. The chain is Aspartate/glutamate leucyltransferase from Rhodopseudomonas palustris (strain BisB18).